A 920-amino-acid polypeptide reads, in one-letter code: Protein translocase subunit SecA 2 (920 aa).

ATP contacts are provided by residues Q91, 109–113 (GEGKT), and D527. The span at 859-870 (GEGSALDRRPTD) shows a compositional bias: basic and acidic residues. A disordered region spans residues 859-920 (GEGSALDRRP…KSRNRRRRKR (62 aa)). The span at 906–920 (PHRPGKSRNRRRRKR) shows a compositional bias: basic residues.

The protein belongs to the SecA family. Monomer and homodimer. Part of the essential Sec protein translocation apparatus which comprises SecA, SecYEG and auxiliary proteins SecDF. Other proteins may also be involved.

The protein resides in the cell membrane. It localises to the cytoplasm. The catalysed reaction is ATP + H2O + cellular proteinSide 1 = ADP + phosphate + cellular proteinSide 2.. In terms of biological role, part of the Sec protein translocase complex. Interacts with the SecYEG preprotein conducting channel. Has a central role in coupling the hydrolysis of ATP to the transfer of proteins into and across the cell membrane, serving as an ATP-driven molecular motor driving the stepwise translocation of polypeptide chains across the membrane. This is Protein translocase subunit SecA 2 from Streptomyces avermitilis (strain ATCC 31267 / DSM 46492 / JCM 5070 / NBRC 14893 / NCIMB 12804 / NRRL 8165 / MA-4680).